The following is a 475-amino-acid chain: MAAGALRGLPVAGGGESSESEDDGWEIGYLDRTSQKLKGLLPIEEKKEKFKKAMTIGDVSLVQELLDSGISVDSTFQYGWTPLMYAASVANAELVRVLLDRGANASFEKDKQSILITACSARGSEEQILKCVELLLSRNADPNVACRRLMTPIMYAARDGHTQVVALLVAHGAEVNTQDENGYTALTWAARQGHKNIVLKLLELGANKMLQTKDGKMPSEIAKRNKHHEIFNLLSFTLNPLEGKLQQLTKEDTICKILTTDSDREKDHIFSSYTAFGDLEVFLHGLGLEHMTDLLKERDITLRHLLTMREDEFTKNGITSKDQQKILAALKELQVEEIQFGELSEETKLEISGDEFLNFLLKLNKQCGHLITAVQNIITELPVNSQKITLEWASPRNFTSVCEELVNNVEDLSEEVCKLKDLIQKLQNERENDPTHIQLREEVSTWNSRILKRTAITVCGFGFLLFICKLTFQRK.

The interval 1 to 25 (MAAGALRGLPVAGGGESSESEDDGW) is disordered. A phosphoserine mark is found at serine 17, serine 18, and serine 20. 6 ANK repeats span residues 45-74 (EKKE…SVDS), 78-107 (YGWT…NASF), 110-144 (DKQS…DPNV), 148-177 (RLMT…EVNT), 181-210 (NGYT…NKML), and 214-243 (DGKM…PLEG). Residues 272 to 334 (SYTAFGDLEV…KILAALKELQ (63 aa)) enclose the SAM domain.

As to quaternary structure, interacts with DDX4, PIWIL1, RANBP9 and TDRD1.

It is found in the cytoplasm. Plays a central role during spermatogenesis by repressing transposable elements and preventing their mobilization, which is essential for the germline integrity. Acts via the piRNA metabolic process, which mediates the repression of transposable elements during meiosis by forming complexes composed of piRNAs and Piwi proteins and governs the methylation and subsequent repression of transposons. Its association with pi-bodies suggests a participation in the primary piRNAs metabolic process. Required prior to the pachytene stage to facilitate the production of multiple types of piRNAs, including those associated with repeats involved in the regulation of retrotransposons. May act by mediating protein-protein interactions during germ cell maturation. The polypeptide is Ankyrin repeat, SAM and basic leucine zipper domain-containing protein 1 (ASZ1) (Pongo abelii (Sumatran orangutan)).